Reading from the N-terminus, the 421-residue chain is MLSIGSLCLSLGTTPKPLKPSKTPKPIRKLYATKAMAGSNPKQVSTFEFRDLMETFAVDVKRAENRPLNVPLIAPFTIASSRLDKVENVAIRIELSDGCVGWGEAPILPFVTAEDQSTAMIKAREACELLKNSSSMKLGLVLERVSEILPGHEFASVRAGVEMALIDAVAKSINVPLWILFGGASDSITTDITIPIVSSAEAAELASKYRKQGFQTLKLKVGKNLKEDIEVLQAIRAVHPDCLFILDANEGYKPEEAIEVLEELHKMGVTPILFEQPVHRDDWEGLGHVTHIAKGKYGVSVAADESCRSLVDAKRIIKGNLADVINIKLAKVGVVGGLEIIEEARTSGLDLMIGGMVETRLAMGFAGHLAAGFGCFKFIDLDTPLLLSEDPVLEGYEVSGAVYKFTDAQGHAGFLDWDNVL.

Residues T193 and K218–K220 each bind substrate. D247, E275, and D304 together coordinate Mg(2+). Residues K328 and D380 to D382 contribute to the substrate site.

It belongs to the mandelate racemase/muconate lactonizing enzyme family. It depends on Mg(2+) as a cofactor.

Catalyzes the epimerization of various hydrophobic and polar dipeptides. Has epimerase activity with L-Ala-L-Ala, L-Ala-L-Ser, L-Ala-L-Thr and L-Ala-L-Trp (in vitro). This is L-Ala-D/L-amino acid epimerase from Populus trichocarpa (Western balsam poplar).